A 121-amino-acid chain; its full sequence is Putative ferredoxin (121 aa).

This sequence to E.coli YkgJ.

This is Putative ferredoxin from Acinetobacter calcoaceticus.